Here is a 428-residue protein sequence, read N- to C-terminus: uncharacterized protein (428 aa).

Histidine 68 is a binding site for Zn(2+). The Proton acceptor role is filled by glutamate 71. Zn(2+)-binding residues include histidine 72 and glutamate 143.

The protein belongs to the peptidase M16 family. Zn(2+) serves as cofactor.

This is an uncharacterized protein from Bacillus subtilis (strain 168).